A 91-amino-acid polypeptide reads, in one-letter code: Cell division topological specificity factor (91 aa).

Belongs to the MinE family.

Prevents the cell division inhibition by proteins MinC and MinD at internal division sites while permitting inhibition at polar sites. This ensures cell division at the proper site by restricting the formation of a division septum at the midpoint of the long axis of the cell. This is Cell division topological specificity factor from Lachnospira eligens (strain ATCC 27750 / DSM 3376 / VPI C15-48 / C15-B4) (Eubacterium eligens).